Consider the following 377-residue polypeptide: F-box protein At4g00755 (377 aa).

Residues 7–47 (LDTDTSLSILSCLDDPSDIVRASAVSRSWRQFVVKYSLSKN) enclose the F-box domain.

The polypeptide is F-box protein At4g00755 (Arabidopsis thaliana (Mouse-ear cress)).